The primary structure comprises 84 residues: MKFLFLFLAILLATKIPVISGKRHNLRCMGNSGICRASCKKNEQPYLYCRNYQACCLQSYMRISISGKEENTDWSYEKQWPRLP.

The N-terminal stretch at 1-21 (MKFLFLFLAILLATKIPVISG) is a signal peptide. Cystine bridges form between cysteine 28/cysteine 55, cysteine 35/cysteine 49, and cysteine 39/cysteine 56.

The protein belongs to the beta-defensin family.

It is found in the secreted. Functionally, has antibacterial activity. This Macaca fascicularis (Crab-eating macaque) protein is Beta-defensin 119 (DEFB119).